The following is a 308-amino-acid chain: HTH-type transcriptional regulator SsuR (308 aa).

In terms of domain architecture, HTH lysR-type spans 1–59 (MNFQQLRFVREAVRQNMNLTEVANVLYTSQSGVSKQIKDLEDELGVDIFIRRGKRLTGL). Residues 19 to 38 (LTEVANVLYTSQSGVSKQIK) constitute a DNA-binding region (H-T-H motif).

Belongs to the LysR transcriptional regulatory family.

Its function is as follows. Transcriptional regulator that is essential for the utilization of a number of organic sulfur sources of either environmental or human origin. Required for aliphatic sulfonate utilization. Binds to DNA at target promoter regions. Targets include the ssuDBC operon, the tauABC operon, three tauD-type genes and atsA. The chain is HTH-type transcriptional regulator SsuR from Burkholderia cenocepacia (strain ATCC BAA-245 / DSM 16553 / LMG 16656 / NCTC 13227 / J2315 / CF5610) (Burkholderia cepacia (strain J2315)).